Consider the following 31-residue polypeptide: Photosystem II reaction center protein M (31 aa).

The helical transmembrane segment at 5 to 25 (ILAFIATALLILVPTAFLLII) threads the bilayer.

Belongs to the PsbM family. As to quaternary structure, PSII is composed of 1 copy each of membrane proteins PsbA, PsbB, PsbC, PsbD, PsbE, PsbF, PsbH, PsbI, PsbJ, PsbK, PsbL, PsbM, PsbT, PsbX, PsbY, PsbZ, Psb30/Ycf12, at least 3 peripheral proteins of the oxygen-evolving complex and a large number of cofactors. It forms dimeric complexes.

The protein resides in the plastid membrane. One of the components of the core complex of photosystem II (PSII). PSII is a light-driven water:plastoquinone oxidoreductase that uses light energy to abstract electrons from H(2)O, generating O(2) and a proton gradient subsequently used for ATP formation. It consists of a core antenna complex that captures photons, and an electron transfer chain that converts photonic excitation into a charge separation. This subunit is found at the monomer-monomer interface. The polypeptide is Photosystem II reaction center protein M (Cuscuta exaltata (Tall dodder)).